The following is a 68-amino-acid chain: Large ribosomal subunit protein bL32 (68 aa).

This sequence belongs to the bacterial ribosomal protein bL32 family.

This Orientia tsutsugamushi (strain Ikeda) (Rickettsia tsutsugamushi) protein is Large ribosomal subunit protein bL32.